Reading from the N-terminus, the 519-residue chain is Maltose/maltodextrin transport system permease protein MalF (519 aa).

Residues 1-18 (MRKNPMDVIKKKHWWQSD) are Cytoplasmic-facing. A helical transmembrane segment spans residues 19 to 41 (ALKWSVLGLLGLLVGYLVVLMYA). Residues 42 to 44 (QGE) are Periplasmic-facing. The chain crosses the membrane as a helical span at residues 45–62 (YLFAITTLILSSAGLYIF). Residues 63-74 (ANRKAYAWRYVY) are Cytoplasmic-facing. Residues 75 to 97 (PGMAGMGLFVLFPLVCTIAIAFT) traverse the membrane as a helical segment. Over 98–288 (NYSSTNQLTF…QKPFLAIFVW (191 aa)) the chain is Periplasmic. An ABC transmembrane type-1 domain is found at 286-510 (FVWTVVFSLI…LLVGALAIVN (225 aa)). The chain crosses the membrane as a helical span at residues 289-311 (TVVFSLITVFLTVAVGMVLACLV). The Cytoplasmic portion of the chain corresponds to 312-323 (QWEALRGKAVYR). The helical transmembrane segment at 324–346 (VLLILPYAVPSFISILIFKGLFN) threads the bilayer. Topologically, residues 347–374 (QSFGEINMMLSALFGVKPAWFSDPTTAR) are periplasmic. Residues 375 to 397 (TMLIIVNTWLGYPYMMILCMGLL) traverse the membrane as a helical segment. The Cytoplasmic portion of the chain corresponds to 398–417 (KAIPDDLYEASAMDGAGPFQ). A helical membrane pass occupies residues 418–440 (NFFKITLPLLIKPLTPLMIASFA). Residues 441 to 488 (FNFNNFVLIQLLTNGGPDRLGTTTPAGYTDLLVNYTYRIAFEGGGGQD) lie on the Periplasmic side of the membrane. The helical transmembrane segment at 489-511 (FGLAAAIATLIFLLVGALAIVNL) threads the bilayer. Over 512–519 (KATRMKFD) the chain is Cytoplasmic.

The protein belongs to the binding-protein-dependent transport system permease family. MalFG subfamily. The complex is composed of two ATP-binding proteins (MalK), two transmembrane proteins (MalG and MalF) and a solute-binding protein (MalE).

Its subcellular location is the cell inner membrane. Part of the ABC transporter complex MalEFGK involved in maltose/maltodextrin import. Probably responsible for the translocation of the substrate across the membrane. This Escherichia coli O6:H1 (strain CFT073 / ATCC 700928 / UPEC) protein is Maltose/maltodextrin transport system permease protein MalF (malF).